The following is a 263-amino-acid chain: S-acyl fatty acid synthase thioesterase, medium chain (263 aa).

Position 1 is an N-acetylmethionine (M1). Catalysis depends on residues S101 and H237. The interval 262–263 (LT) is important for interaction with FASN.

The protein belongs to the thioesterase family. Interacts (via C-terminus) with FASN.

It localises to the cytoplasm. The protein localises to the cytosol. The catalysed reaction is (9Z)-octadecenoyl-[ACP] + H2O = (9Z)-octadecenoate + holo-[ACP] + H(+). The enzyme catalyses decanoyl-CoA + H2O = decanoate + CoA + H(+). It catalyses the reaction dodecanoyl-CoA + H2O = dodecanoate + CoA + H(+). It carries out the reaction tetradecanoyl-CoA + H2O = tetradecanoate + CoA + H(+). The catalysed reaction is hexadecanoyl-CoA + H2O = hexadecanoate + CoA + H(+). In terms of biological role, contributes to the release of free fatty acids from fatty acid synthase (FASN). Has broad substrate specificity, giving rise to a range of free fatty acids with chain lengths between 10 and 16 carbon atoms (C10 - C16). This chain is S-acyl fatty acid synthase thioesterase, medium chain, found in Rattus norvegicus (Rat).